A 353-amino-acid chain; its full sequence is Guanine nucleotide-binding protein subunit alpha (353 aa).

A disordered region spans residues 1 to 21 (MGCGMSTEEKEGKARNEEIEN). Residue glycine 2 is the site of N-myristoyl glycine attachment. Cysteine 3 carries the S-palmitoyl cysteine lipid modification. Residues 7 to 21 (TEEKEGKARNEEIEN) show a composition bias toward basic and acidic residues. One can recognise a G-alpha domain in the interval 32-353 (NEIKMLLLGA…QENLRLCGLI (322 aa)). Residues 35-48 (KMLLLGAGESGKST) are G1 motif. Positions 43, 44, 45, 46, 47, 48, 150, 175, 181, 203, 269, 270, 272, and 325 each coordinate GTP. Position 47 (serine 47) interacts with Mg(2+). Residues 173 to 181 (DVLRSRVKT) form a G2 motif region. Threonine 181 serves as a coordination point for Mg(2+). A G3 motif region spans residues 196-205 (YRMFDVGGQR). Residues 265 to 272 (ILFLNKID) are G4 motif. The tract at residues 323 to 328 (TCATDT) is G5 motif.

This sequence belongs to the G-alpha family. G(q) subfamily. In terms of assembly, g proteins are composed of 3 units; alpha, beta and gamma. The alpha chain contains the guanine nucleotide binding site. Requires Mg(2+) as cofactor.

Guanine nucleotide-binding proteins (G proteins) are involved as modulators or transducers in various transmembrane signaling systems. Plays a role in pathogenicity, specifically in appressorium formation in rice blast disease. Also involved in mating. This is Guanine nucleotide-binding protein subunit alpha (MAGB) from Pyricularia oryzae (strain 70-15 / ATCC MYA-4617 / FGSC 8958) (Rice blast fungus).